The chain runs to 119 residues: FAD-linked sulfhydryl oxidase (119 aa).

Residues 1–97 (MLHWGPKYWR…ISWSEYKNIY (97 aa)) enclose the ERV/ALR sulfhydryl oxidase domain. A disulfide bridge connects residues cysteine 44 and cysteine 47.

Belongs to the asfivirus B119L family. Interacts with A151R. It depends on FAD as a cofactor.

The protein resides in the host cytoplasm. The protein localises to the virion. The catalysed reaction is 2 R'C(R)SH + O2 = R'C(R)S-S(R)CR' + H2O2. FAD-dependent sulfhydryl oxidase that catalyzes the formation of disulfide bonds in viral proteins produced in the cell cytoplasm. Involved in virion maturation. This African swine fever virus (isolate Warthog/Namibia/Wart80/1980) (ASFV) protein is FAD-linked sulfhydryl oxidase.